We begin with the raw amino-acid sequence, 242 residues long: tRNA (guanine-N(1)-)-methyltransferase (242 aa).

S-adenosyl-L-methionine contacts are provided by residues Gly109 and 129-134; that span reads LGDFVL.

Belongs to the RNA methyltransferase TrmD family. Homodimer.

It localises to the cytoplasm. The enzyme catalyses guanosine(37) in tRNA + S-adenosyl-L-methionine = N(1)-methylguanosine(37) in tRNA + S-adenosyl-L-homocysteine + H(+). In terms of biological role, specifically methylates guanosine-37 in various tRNAs. The protein is tRNA (guanine-N(1)-)-methyltransferase of Exiguobacterium sibiricum (strain DSM 17290 / CCUG 55495 / CIP 109462 / JCM 13490 / 255-15).